Reading from the N-terminus, the 353-residue chain is Alternative oxidase, mitochondrial (353 aa).

The tract at residues 25–45 (FRSTDDEDENNPSTELATDTT) is disordered. Polar residues predominate over residues 35-45 (NPSTELATDTT). The helical transmembrane segment at 153-173 (FLFLESIAGVPGMVAGMIRHL) threads the bilayer. Glutamate 157, glutamate 196, and histidine 199 together coordinate Fe cation. A helical transmembrane segment spans residues 217–237 (LLIGQIIFYNLFFISYLISPA). Fe cation-binding residues include glutamate 247, glutamate 301, and histidine 304.

Belongs to the alternative oxidase family. It depends on Fe cation as a cofactor.

It is found in the mitochondrion inner membrane. Catalyzes cyanide-resistant oxygen consumption. May increase respiration when the cytochrome respiratory pathway is restricted, or in response to low temperatures. This Yarrowia lipolytica (strain CLIB 122 / E 150) (Yeast) protein is Alternative oxidase, mitochondrial (AOX).